The following is a 308-amino-acid chain: Oxygen-dependent coproporphyrinogen-III oxidase (308 aa).

Residue Ser-100 participates in substrate binding. Residues His-104 and His-114 each contribute to the a divalent metal cation site. His-114 acts as the Proton donor in catalysis. Residue 116–118 (NFR) coordinates substrate. Residues His-153 and His-183 each coordinate a divalent metal cation. The tract at residues 248-283 (YVEFNLVFDRGTIFGLQSGGRTESILSSMPPIATWK) is important for dimerization. 266–268 (GGR) serves as a coordination point for substrate.

This sequence belongs to the aerobic coproporphyrinogen-III oxidase family. Homodimer. It depends on a divalent metal cation as a cofactor.

The protein localises to the cytoplasm. The enzyme catalyses coproporphyrinogen III + O2 + 2 H(+) = protoporphyrinogen IX + 2 CO2 + 2 H2O. It participates in porphyrin-containing compound metabolism; protoporphyrin-IX biosynthesis; protoporphyrinogen-IX from coproporphyrinogen-III (O2 route): step 1/1. Its function is as follows. Involved in the heme biosynthesis. Catalyzes the aerobic oxidative decarboxylation of propionate groups of rings A and B of coproporphyrinogen-III to yield the vinyl groups in protoporphyrinogen-IX. This is Oxygen-dependent coproporphyrinogen-III oxidase from Francisella tularensis subsp. tularensis (strain FSC 198).